The sequence spans 165 residues: uncharacterized protein (165 aa).

Positions 1–17 (MIRGFFLILLFLLLAFF) are cleaved as a signal peptide.

This is an uncharacterized protein from Aquifex aeolicus (strain VF5).